Reading from the N-terminus, the 368-residue chain is Aminomethyltransferase (368 aa).

This sequence belongs to the GcvT family. In terms of assembly, the glycine cleavage system is composed of four proteins: P, T, L and H.

The catalysed reaction is N(6)-[(R)-S(8)-aminomethyldihydrolipoyl]-L-lysyl-[protein] + (6S)-5,6,7,8-tetrahydrofolate = N(6)-[(R)-dihydrolipoyl]-L-lysyl-[protein] + (6R)-5,10-methylene-5,6,7,8-tetrahydrofolate + NH4(+). The glycine cleavage system catalyzes the degradation of glycine. The polypeptide is Aminomethyltransferase (Thermoanaerobacter sp. (strain X514)).